We begin with the raw amino-acid sequence, 282 residues long: Bifunctional protein FolD (282 aa).

NADP(+) contacts are provided by residues 165–167 (GRS) and Ser190.

It belongs to the tetrahydrofolate dehydrogenase/cyclohydrolase family. Homodimer.

It carries out the reaction (6R)-5,10-methylene-5,6,7,8-tetrahydrofolate + NADP(+) = (6R)-5,10-methenyltetrahydrofolate + NADPH. The catalysed reaction is (6R)-5,10-methenyltetrahydrofolate + H2O = (6R)-10-formyltetrahydrofolate + H(+). It functions in the pathway one-carbon metabolism; tetrahydrofolate interconversion. In terms of biological role, catalyzes the oxidation of 5,10-methylenetetrahydrofolate to 5,10-methenyltetrahydrofolate and then the hydrolysis of 5,10-methenyltetrahydrofolate to 10-formyltetrahydrofolate. The protein is Bifunctional protein FolD of Macrococcus caseolyticus (strain JCSC5402) (Macrococcoides caseolyticum).